Consider the following 544-residue polypeptide: Tyrosine-protein kinase Yes (544 aa).

The N-myristoyl glycine moiety is linked to residue Gly-2. An SH3 domain is found at 92-153 (GGVTFFVALY…PSNYVAPADS (62 aa)). In terms of domain architecture, SH2 spans 159–256 (WYFGKLSRKD…GLCYKLTTVC (98 aa)). Positions 278–531 (LRLDVRLGQG…YIQSFLEDYF (254 aa)) constitute a Protein kinase domain. ATP-binding positions include 284–292 (LGQGCFGEV) and Lys-306. Asp-397 functions as the Proton acceptor in the catalytic mechanism. The residue at position 427 (Tyr-427) is a Phosphotyrosine; by autocatalysis.

The protein belongs to the protein kinase superfamily. Tyr protein kinase family. SRC subfamily.

The enzyme catalyses L-tyrosyl-[protein] + ATP = O-phospho-L-tyrosyl-[protein] + ADP + H(+). The protein is Tyrosine-protein kinase Yes (yes) of Xiphophorus hellerii (Green swordtail).